A 56-amino-acid polypeptide reads, in one-letter code: Large ribosomal subunit protein bL33 (56 aa).

Belongs to the bacterial ribosomal protein bL33 family.

The protein is Large ribosomal subunit protein bL33 of Anaplasma marginale (strain Florida).